Consider the following 333-residue polypeptide: Taste receptor type 2 member 123 (333 aa).

Topologically, residues 1 to 13 are extracellular; the sequence is MFSQKINYSHLFT. N7 is a glycosylation site (N-linked (GlcNAc...) asparagine). Residues 14–34 form a helical membrane-spanning segment; it reads FSITLYVEIVTGILGHGFIAL. Over 35–60 the chain is Cytoplasmic; sequence VNIMDWVKRRRISSVDQILTALALTR. A helical membrane pass occupies residues 61–81; that stretch reads FIYVLSMLICILLFMLCPHLP. Residues 82 to 90 lie on the Extracellular side of the membrane; it reads RRSEMLSAM. The helical transmembrane segment at 91–111 threads the bilayer; sequence GIFWVVNSHFSIWLTTCLGVF. The Cytoplasmic segment spans residues 112–134; that stretch reads YFLKIANFSNSFFLYLKWRVKKV. Residues 135–155 traverse the membrane as a helical segment; the sequence is ILIIILASLIFLTLHILSLGI. The Extracellular portion of the chain corresponds to 156–205; the sequence is YDQFSIAAYVGNMSYSLTDLTQFSSTFLFSNSSNVFLITNSSHVFLPINS. N-linked (GlcNAc...) asparagine glycosylation is found at N167, N186, and N195. A helical transmembrane segment spans residues 206 to 226; that stretch reads LFMLIPFTVSLVAFLMLIFSL. The Cytoplasmic portion of the chain corresponds to 227 to 253; the sequence is WKHHKKMQVNAKQPRDVSTMAHIKALQ. The chain crosses the membrane as a helical span at residues 254–274; it reads TVFSFLLLYAIYLLFLIIGIL. Residues 275–281 are Extracellular-facing; that stretch reads NLGLMEK. Residues 282–302 traverse the membrane as a helical segment; it reads IVILIFDHISGAVFPISHSFV. The Cytoplasmic segment spans residues 303–333; that stretch reads LILGNSKLRQASLSVLPCLRCQSKDMDTMGL.

The protein belongs to the G-protein coupled receptor T2R family. Expressed in subsets of taste receptor cells of the tongue and palate epithelium and exclusively in gustducin-positive cells. Expressed in the duodenum, antrum and fundus (part of the stomach).

It is found in the membrane. Functionally, gustducin-coupled receptor implicated in the perception of bitter compounds in the oral cavity and the gastrointestinal tract. Signals through PLCB2 and the calcium-regulated cation channel TRPM5. In Mus musculus (Mouse), this protein is Taste receptor type 2 member 123 (Tas2r123).